Here is a 345-residue protein sequence, read N- to C-terminus: 4-hydroxyproline 2-epimerase (345 aa).

Gln85 is a substrate binding site. Ser93 acts as the Proton acceptor in catalysis. Residues 94–95 (GS) and Asp251 each bind substrate. Catalysis depends on Cys255, which acts as the Proton donor. Substrate is bound at residue 256-257 (GT).

Belongs to the proline racemase family.

The catalysed reaction is trans-4-hydroxy-L-proline = cis-4-hydroxy-D-proline. Catalyzes the epimerization of trans-4-hydroxy-L-proline (t4LHyp) to cis-4-hydroxy-D-proline (c4DHyp). May be involved in a degradation pathway of t4LHyp. Can also catalyze the epimerization of trans-3-hydroxy-L-proline (t3LHyp) to cis-3-hydroxy-D-proline (c3DHyp) in vitro, albeit with 2-fold lower efficiency. Displays no proline racemase activity. This Rhizobium etli (strain ATCC 51251 / DSM 11541 / JCM 21823 / NBRC 15573 / CFN 42) protein is 4-hydroxyproline 2-epimerase.